A 77-amino-acid chain; its full sequence is Thioredoxin (77 aa).

Active-site nucleophile residues include Cys11 and Cys14. An intrachain disulfide couples Cys11 to Cys14.

It belongs to the glutaredoxin family.

Its function is as follows. Does not function as a glutathione-disulfide oxidoreductase in the presence of glutathione and glutathione reductase. Has low thioredoxin activity in vitro. The chain is Thioredoxin from Methanothermobacter thermautotrophicus (strain ATCC 29096 / DSM 1053 / JCM 10044 / NBRC 100330 / Delta H) (Methanobacterium thermoautotrophicum).